Here is a 547-residue protein sequence, read N- to C-terminus: Myrosinase 2 (547 aa).

The signal sequence occupies residues 1-28 (MQHNTYIYILTMKLLGFALAILLVVATC). Intrachain disulfides connect cysteine 36–cysteine 460, cysteine 44–cysteine 456, and cysteine 236–cysteine 244. A beta-D-glucoside-binding positions include glutamine 69, histidine 171, and 216 to 217 (NQ). A glycan (N-linked (GlcNAc...) asparagine) is linked at asparagine 340. Tyrosine 359 provides a ligand contact to a beta-D-glucoside. N-linked (GlcNAc...) asparagine glycosylation occurs at asparagine 384. Residues glutamate 430, tryptophan 479, 486–487 (EF), and phenylalanine 495 contribute to the a beta-D-glucoside site. Catalysis depends on glutamate 430, which acts as the Nucleophile. N-linked (GlcNAc...) asparagine glycosylation is present at asparagine 504.

The protein belongs to the glycosyl hydrolase 1 family. In terms of assembly, interacts with MVP1. Expressed in phloem-associated cells.

The catalysed reaction is a thioglucoside + H2O = a sugar + a thiol.. May degrade glucosinolates (glucose residue linked by a thioglucoside bound to an amino acid derivative) to glucose, sulfate and any of the products: thiocyanates, isothiocyanates, nitriles, epithionitriles or oxazolidine-2-thiones. These toxic degradation products can deter insect herbivores. Seems to function in abscisic acid (ABA) and methyl jasmonate (MeJA) signaling in guard cells. Functionally redundant with TGG1. This is Myrosinase 2 from Arabidopsis thaliana (Mouse-ear cress).